A 593-amino-acid polypeptide reads, in one-letter code: MTNHQKVGTLYKRLLLQVKHLMAFSAFGCYRKYIFLSADASMIYLINPILNYGFGPGGGITKQSATILMLMGVGMVGFIALRSVGSFVSQYFIGSLGQKVVYKFRKDIYKRLMDLPASFFDKHSTGQIISRLLYNVDQVTEATSTAIITVVQDGTFVIGLIVVMFVSSWQLSLFLIVVGPFLGLFISIINKKFRNLSRNTQSSMGNVTHTAEETIRNYKEIRIFGAQQKQQNKFFKNLDYTYSQQIRTIALDALTSPVIQIIASLVLAFSLFTIAIFGTNDGGGSSWLTAGSFASFFAAAAAILKPIKNLTKVNVVIQKAVAATEDIFYILDYPAEKETGSKELAKVDGNVTIKDLSFAFGEHKVLSGVSVDIKAGQTVAFVGKSGSGKTTLTSIISRFYTQHKGEILLDGVDTRELTLENLRSHLSIVSQNVHLFDDTVYNNIAFGLSREVSEDEVIDALKRANAYEFVQELSDGIHTNIGNNGSKLSGGQRQRISIARALLKNAPVLIFDEATSALDNESERVVQQALESLTESCTTIVIAHRLSTVENADKIVVMDGGKVVESGKHQELLEQGGLYTGSINRDFNSTYAR.

The next 6 helical transmembrane spans lie at 33–55 (YIFL…YGFG), 67–87 (ILML…VGSF), 146–166 (AIIT…VMFV), 169–189 (WQLS…ISII), 258–278 (VIQI…AIFG), and 284–304 (GSSW…AAIL). In terms of domain architecture, ABC transmembrane type-1 spans 38-319 (ADASMIYLIN…LTKVNVVIQK (282 aa)). In terms of domain architecture, ABC transporter spans 351 to 585 (VTIKDLSFAF…GGLYTGSINR (235 aa)). 383-390 (GKSGSGKT) serves as a coordination point for ATP.

The protein belongs to the ABC transporter superfamily. Lipid exporter (TC 3.A.1.106) family. Homodimer.

It is found in the cell membrane. It catalyses the reaction ATP + H2O + lipid A-core oligosaccharideSide 1 = ADP + phosphate + lipid A-core oligosaccharideSide 2.. Functionally, involved in lipopolysaccharide (LPS) biosynthesis. Translocates lipid A-core from the inner to the outer leaflet of the inner membrane. Transmembrane domains (TMD) form a pore in the inner membrane and the ATP-binding domain (NBD) is responsible for energy generation. In Francisella novicida, this protein is ATP-dependent lipid A-core flippase.